The primary structure comprises 269 residues: NAD kinase (269 aa).

The active-site Proton acceptor is D45. NAD(+) contacts are provided by residues 45 to 46, 122 to 123, R149, D151, and A186; these read DG and NE.

This sequence belongs to the NAD kinase family. A divalent metal cation is required as a cofactor.

Its subcellular location is the cytoplasm. It catalyses the reaction NAD(+) + ATP = ADP + NADP(+) + H(+). Its function is as follows. Involved in the regulation of the intracellular balance of NAD and NADP, and is a key enzyme in the biosynthesis of NADP. Catalyzes specifically the phosphorylation on 2'-hydroxyl of the adenosine moiety of NAD to yield NADP. The sequence is that of NAD kinase from Staphylococcus saprophyticus subsp. saprophyticus (strain ATCC 15305 / DSM 20229 / NCIMB 8711 / NCTC 7292 / S-41).